Consider the following 130-residue polypeptide: Protein ApaG (130 aa).

Residues 3-127 (RALTRDIEVT…FSLDSPGLVR (125 aa)) enclose the ApaG domain.

The sequence is that of Protein ApaG from Sinorhizobium fredii (strain NBRC 101917 / NGR234).